The following is a 355-amino-acid chain: S-adenosylmethionine:tRNA ribosyltransferase-isomerase (355 aa).

Belongs to the QueA family. In terms of assembly, monomer.

Its subcellular location is the cytoplasm. It carries out the reaction 7-aminomethyl-7-carbaguanosine(34) in tRNA + S-adenosyl-L-methionine = epoxyqueuosine(34) in tRNA + adenine + L-methionine + 2 H(+). The protein operates within tRNA modification; tRNA-queuosine biosynthesis. Its function is as follows. Transfers and isomerizes the ribose moiety from AdoMet to the 7-aminomethyl group of 7-deazaguanine (preQ1-tRNA) to give epoxyqueuosine (oQ-tRNA). This is S-adenosylmethionine:tRNA ribosyltransferase-isomerase from Aeromonas salmonicida (strain A449).